The following is a 330-amino-acid chain: Aspartate--ammonia ligase (330 aa).

The protein belongs to the class-II aminoacyl-tRNA synthetase family. AsnA subfamily.

It is found in the cytoplasm. The enzyme catalyses L-aspartate + NH4(+) + ATP = L-asparagine + AMP + diphosphate + H(+). Its pathway is amino-acid biosynthesis; L-asparagine biosynthesis; L-asparagine from L-aspartate (ammonia route): step 1/1. This Escherichia coli (strain SMS-3-5 / SECEC) protein is Aspartate--ammonia ligase.